A 156-amino-acid polypeptide reads, in one-letter code: Small ribosomal subunit protein uS7 (156 aa).

Belongs to the universal ribosomal protein uS7 family. In terms of assembly, part of the 30S ribosomal subunit. Contacts proteins S9 and S11.

In terms of biological role, one of the primary rRNA binding proteins, it binds directly to 16S rRNA where it nucleates assembly of the head domain of the 30S subunit. Is located at the subunit interface close to the decoding center, probably blocks exit of the E-site tRNA. In Vibrio atlanticus (strain LGP32) (Vibrio splendidus (strain Mel32)), this protein is Small ribosomal subunit protein uS7.